The primary structure comprises 177 residues: O-acetyl-ADP-ribose deacetylase (177 aa).

The Macro domain maps to 1–175 (MKTRIHVVQG…LYERLLTQQG (175 aa)). Substrate-binding positions include 11 to 12 (DI), Asn-25, 33 to 35 (GVD), and 122 to 126 (STGVY). The Proton acceptor role is filled by Asp-35.

This sequence belongs to the MacroD-type family. YmdB subfamily. As to quaternary structure, homodimer. Interacts with RNase III.

The enzyme catalyses 3''-O-acetyl-ADP-D-ribose + H2O = ADP-D-ribose + acetate + H(+). The catalysed reaction is 2''-O-acetyl-ADP-D-ribose + H2O = ADP-D-ribose + acetate + H(+). In terms of biological role, deacetylates O-acetyl-ADP ribose to yield ADP-ribose and free acetate. Down-regulates ribonuclease 3 (RNase III) activity. Acts by interacting directly with the region of the ribonuclease that is required for dimerization/activation. The chain is O-acetyl-ADP-ribose deacetylase from Shigella flexneri serotype 5b (strain 8401).